The primary structure comprises 238 residues: Large ribosomal subunit protein uL1 (238 aa).

The protein belongs to the universal ribosomal protein uL1 family. As to quaternary structure, part of the 50S ribosomal subunit.

In terms of biological role, binds directly to 23S rRNA. The L1 stalk is quite mobile in the ribosome, and is involved in E site tRNA release. Protein L1 is also a translational repressor protein, it controls the translation of the L11 operon by binding to its mRNA. This Gloeobacter violaceus (strain ATCC 29082 / PCC 7421) protein is Large ribosomal subunit protein uL1.